The sequence spans 896 residues: Desmocollin-3 (896 aa).

The first 31 residues, 1–31 (MVVPEFRSPQCRALCTKLLLTLWVFSFVGEA), serve as a signal peptide directing secretion. The propeptide occupies 32-135 (CKKVTFHVPS…KETVLRRSKR (104 aa)). 5 consecutive Cadherin domains span residues 136-243 (RWAP…YPLF), 244-355 (TEAI…APTF), 356-472 (RQNT…GPEC), 473-580 (KPPE…EIIQ), and 581-691 (DYIV…TLGK). At 136 to 695 (RWAPIPCSMQ…GITLGKWAIL (560 aa)) the chain is on the extracellular side. Residue Asn-166 is glycosylated (N-linked (GlcNAc...) asparagine). N-linked (GlcNAc...) asparagine glycosylation is found at Asn-392 and Asn-547. N-linked (GlcNAc...) (high mannose) asparagine glycosylation occurs at Asn-630. A helical transmembrane segment spans residues 696-716 (AILLGIALLFSVLLTLVCGVV). Over 717–896 (TARKGKHFPE…LTLAETCTKR (180 aa)) the chain is Cytoplasmic.

As to quaternary structure, may form homodimers. Interacts with DSG1; there is evidence to suggest that the interaction promotes cell-cell adhesion of keratinocytes. Expressed in the basal layers of epidermal stratified epithelia from birth (at protein level).

The protein localises to the cell membrane. It localises to the cell junction. It is found in the desmosome. Its subcellular location is the cytoplasm. In terms of biological role, a component of desmosome cell-cell junctions which are required for positive regulation of cellular adhesion. Required for cell-cell adhesion in the epidermis, as a result required for the maintenance of the dermal cohesion and the dermal barrier function. Required for cell-cell adhesion of epithelial cell layers surrounding the telogen hair club, as a result plays an important role in telogen hair shaft anchorage. Essential for successful completion of embryo compaction and development beyond the 8-cell stage. This Mus musculus (Mouse) protein is Desmocollin-3 (Dsc3).